The following is a 212-amino-acid chain: ATP synthase F(0) complex subunit a (212 aa).

A run of 6 helical transmembrane segments spans residues 3-23 (MMGI…IYTS), 58-78 (WAAM…LGLL), 87-107 (QLSM…LTGL), 128-148 (IPLL…ALGV), 169-189 (FVLL…LVLL), and 192-212 (LEIA…TLYL).

It belongs to the ATPase A chain family. As to quaternary structure, component of the ATP synthase complex composed at least of ATP5F1A/subunit alpha, ATP5F1B/subunit beta, ATP5MC1/subunit c (homooctomer), MT-ATP6/subunit a, MT-ATP8/subunit 8, ATP5ME/subunit e, ATP5MF/subunit f, ATP5MG/subunit g, ATP5MK/subunit k, ATP5MJ/subunit j, ATP5F1C/subunit gamma, ATP5F1D/subunit delta, ATP5F1E/subunit epsilon, ATP5PF/subunit F6, ATP5PB/subunit b, ATP5PD/subunit d, ATP5PO/subunit OSCP. ATP synthase complex consists of a soluble F(1) head domain (subunits alpha(3) and beta(3)) - the catalytic core - and a membrane F(0) domain - the membrane proton channel (subunits c, a, 8, e, f, g, k and j). These two domains are linked by a central stalk (subunits gamma, delta, and epsilon) rotating inside the F1 region and a stationary peripheral stalk (subunits F6, b, d, and OSCP). Interacts with DNAJC30; interaction is direct.

The protein resides in the mitochondrion inner membrane. It carries out the reaction H(+)(in) = H(+)(out). Subunit a, of the mitochondrial membrane ATP synthase complex (F(1)F(0) ATP synthase or Complex V) that produces ATP from ADP in the presence of a proton gradient across the membrane which is generated by electron transport complexes of the respiratory chain. ATP synthase complex consist of a soluble F(1) head domain - the catalytic core - and a membrane F(1) domain - the membrane proton channel. These two domains are linked by a central stalk rotating inside the F(1) region and a stationary peripheral stalk. During catalysis, ATP synthesis in the catalytic domain of F(1) is coupled via a rotary mechanism of the central stalk subunits to proton translocation. With the subunit c (ATP5MC1), forms the proton-conducting channel in the F(0) domain, that contains two crucial half-channels (inlet and outlet) that facilitate proton movement from the mitochondrial intermembrane space (IMS) into the matrix. Protons are taken up via the inlet half-channel and released through the outlet half-channel, following a Grotthuss mechanism. This is ATP synthase F(0) complex subunit a from Tropidurus hispidus (Peters' lava lizard).